The primary structure comprises 172 residues: Endoribonuclease YbeY (172 aa).

Residues His124, His128, and His134 each contribute to the Zn(2+) site.

It belongs to the endoribonuclease YbeY family. It depends on Zn(2+) as a cofactor.

It localises to the cytoplasm. Single strand-specific metallo-endoribonuclease involved in late-stage 70S ribosome quality control and in maturation of the 3' terminus of the 16S rRNA. The sequence is that of Endoribonuclease YbeY from Rhodopseudomonas palustris (strain BisA53).